We begin with the raw amino-acid sequence, 193 residues long: Putative F-box protein At1g31072 (193 aa).

One can recognise an F-box domain in the interval 4-53; the sequence is EKTLDSIPIDVFLDIFSRLPAKSVGRSCCVSNRWASILGSQDFKELFLTM.

The protein is Putative F-box protein At1g31072 of Arabidopsis thaliana (Mouse-ear cress).